The chain runs to 153 residues: Insulin-like growth factor 1 (153 aa).

The b stretch occupies residues 49-77 (GPETLCGAELVDALQFVCGDRGFYFNKPT). Cystine bridges form between Cys-54-Cys-96, Cys-66-Cys-109, and Cys-95-Cys-100. A c region spans residues 78–89 (GYGSSSRRAPQT). The segment at 90 to 110 (GIVDECCFRSCDLRRLEMYCA) is a. Positions 111–118 (PLKPAKSA) are d. A propeptide spans 119-153 (RSVRAQRHTDMPKAQKEVHLKNASRGSAGNKNYRM) (e peptide). A disordered region spans residues 120 to 153 (SVRAQRHTDMPKAQKEVHLKNASRGSAGNKNYRM). Positions 125-138 (RHTDMPKAQKEVHL) are enriched in basic and acidic residues. A compositionally biased stretch (polar residues) spans 142–153 (SRGSAGNKNYRM).

It belongs to the insulin family. Forms a ternary complex with IGFR1 and ITGAV:ITGB3. Forms a ternary complex with IGFR1 and ITGA6:ITGB4. Forms a ternary complex with IGFBP3 and ALS.

The protein resides in the secreted. Functionally, the insulin-like growth factors, isolated from plasma, are structurally and functionally related to insulin but have a much higher growth-promoting activity. May be a physiological regulator of [1-14C]-2-deoxy-D-glucose (2DG) transport and glycogen synthesis in osteoblasts. Stimulates glucose transport in bone-derived osteoblastic (PyMS) cells and is effective at much lower concentrations than insulin, not only regarding glycogen and DNA synthesis but also with regard to enhancing glucose uptake. May play a role in synapse maturation. Ca(2+)-dependent exocytosis of IGF1 is required for sensory perception of smell in the olfactory bulb. Acts as a ligand for IGF1R. Binds to the alpha subunit of IGF1R, leading to the activation of the intrinsic tyrosine kinase activity which autophosphorylates tyrosine residues in the beta subunit thus initiating a cascade of down-stream signaling events leading to activation of the PI3K-AKT/PKB and the Ras-MAPK pathways. Binds to integrins ITGAV:ITGB3 and ITGA6:ITGB4. Its binding to integrins and subsequent ternary complex formation with integrins and IGFR1 are essential for IGF1 signaling. Induces the phosphorylation and activation of IGFR1, MAPK3/ERK1, MAPK1/ERK2 and AKT1. As part of the MAPK/ERK signaling pathway, acts as a negative regulator of apoptosis in cardiomyocytes via promotion of STUB1/CHIP-mediated ubiquitination and degradation of ICER-type isoforms of CREM. The polypeptide is Insulin-like growth factor 1 (Canis lupus familiaris (Dog)).